A 454-amino-acid chain; its full sequence is Maintenance of mitochondrial morphology protein 1 (454 aa).

The Lumenal segment spans residues 1-128 (MSMVIGIGDL…QSSGWGFAHG (128 aa)). Residues 129–149 (LLVGQLSVVAVLAFFIKFFIF) traverse the membrane as a helical segment. At 150-454 (GNSSMARPLM…SESETAVDSN (305 aa)) the chain is on the cytoplasmic side. Residues 207–430 (QSESLDWFNV…EPRFQLIELP (224 aa)) form the SMP-LTD domain.

This sequence belongs to the MMM1 family. In terms of assembly, homodimer. Component of the ER-mitochondria encounter structure (ERMES) or MDM complex, composed of MMM1, MDM10, MDM12 and MDM34. An MMM1 homodimer associates with one molecule of MDM12 on each side in a pairwise head-to-tail manner, and the SMP-LTD domains of MMM1 and MDM12 generate a continuous hydrophobic tunnel for phospholipid trafficking.

The protein resides in the endoplasmic reticulum membrane. Functionally, component of the ERMES/MDM complex, which serves as a molecular tether to connect the endoplasmic reticulum (ER) and mitochondria. Components of this complex are involved in the control of mitochondrial shape and protein biogenesis, and function in nonvesicular lipid trafficking between the ER and mitochondria. The MDM12-MMM1 subcomplex functions in the major beta-barrel assembly pathway that is responsible for biogenesis of all outer membrane beta-barrel proteins, and acts in a late step after the SAM complex. The MDM10-MDM12-MMM1 subcomplex further acts in the TOM40-specific pathway after the action of the MDM12-MMM1 complex. Essential for establishing and maintaining the structure of mitochondria and maintenance of mtDNA nucleoids. This Komagataella phaffii (strain GS115 / ATCC 20864) (Yeast) protein is Maintenance of mitochondrial morphology protein 1.